Consider the following 120-residue polypeptide: Large ribosomal subunit protein bL20 (120 aa).

Belongs to the bacterial ribosomal protein bL20 family.

Binds directly to 23S ribosomal RNA and is necessary for the in vitro assembly process of the 50S ribosomal subunit. It is not involved in the protein synthesizing functions of that subunit. The sequence is that of Large ribosomal subunit protein bL20 from Chlamydia abortus (strain DSM 27085 / S26/3) (Chlamydophila abortus).